We begin with the raw amino-acid sequence, 166 residues long: 3-hydroxyacyl-[acyl-carrier-protein] dehydratase, mitochondrial (166 aa).

The transit peptide at 1 to 17 directs the protein to the mitochondrion; that stretch reads MLAKTVFPRGLLVLRSF. Residues 34–125 enclose the MaoC-like domain; that stretch reads ETRVFSSEDI…VQAIALRETK (92 aa).

Homodimer. Expressed in leaves, roots, siliques and flowers.

It localises to the mitochondrion. The enzyme catalyses a (3R)-hydroxyacyl-[ACP] = a (2E)-enoyl-[ACP] + H2O. It catalyses the reaction (3R)-hydroxyhexadecanoyl-[ACP] = (2E)-hexadecenoyl-[ACP] + H2O. The catalysed reaction is (3R)-hydroxydecanoyl-[ACP] = (2E)-decenoyl-[ACP] + H2O. It participates in lipid metabolism; fatty acid biosynthesis. Its function is as follows. 3-hydroxyl-[acyl-carrier-protein] (3-hydroxyl-ACP) dehydratase required for mitochondrial fatty acid synthesis (mtFAS). MtFAS are essential for photorespiration and plant development, probably by influencing mitochondrial membrane lipid composition and other lipid metabolic pathways. This chain is 3-hydroxyacyl-[acyl-carrier-protein] dehydratase, mitochondrial, found in Arabidopsis thaliana (Mouse-ear cress).